The sequence spans 462 residues: NAD-capped RNA hydrolase NUDT12 (462 aa).

ANK repeat units follow at residues 11–40 (EIVT…SLLN), 45–74 (NGWT…DRSI), and 78–98 (SRQT…ANLL). Residue Lys-185 is modified to N6-succinyllysine. Zn(2+)-binding residues include Cys-284 and Cys-287. Lys-292 is subject to N6-succinyllysine. 2 residues coordinate Zn(2+): Cys-302 and Cys-307. Residues Tyr-318, 354–356 (AGF), Glu-370, Glu-374, and Glu-415 contribute to the substrate site. Residues 319–453 (PRVDPVVIMQ…SRAIAHQLIK (135 aa)) enclose the Nudix hydrolase domain. Mg(2+)-binding residues include Ala-354, Glu-370, Glu-374, and Glu-415. The Nudix box signature appears at 355-376 (GFIEPGETIEDAVRREVEEESG). The short motif at 460–462 (PNL) is the Microbody targeting signal element.

It belongs to the Nudix hydrolase family. NudC subfamily. As to quaternary structure, homodimer. Homodimerization is essential for its catalytic activity and protein stability. Interacts (via ANK repeats) with BLMH. Mg(2+) is required as a cofactor. The cofactor is Zn(2+).

It localises to the cytoplasm. The protein resides in the peroxisome. The protein localises to the cytoplasmic granule. The enzyme catalyses a 5'-end NAD(+)-phospho-ribonucleoside in mRNA + H2O = a 5'-end phospho-adenosine-phospho-ribonucleoside in mRNA + beta-nicotinamide D-ribonucleotide + 2 H(+). It catalyses the reaction NAD(+) + H2O = beta-nicotinamide D-ribonucleotide + AMP + 2 H(+). It carries out the reaction NADH + H2O = reduced beta-nicotinamide D-ribonucleotide + AMP + 2 H(+). The catalysed reaction is NADPH + H2O = reduced beta-nicotinamide D-ribonucleotide + adenosine 2',5'-bisphosphate + 2 H(+). Functionally, mRNA decapping enzyme that specifically removes the nicotinamide adenine dinucleotide (NAD) cap from a subset of mRNAs by hydrolyzing the diphosphate linkage to produce nicotinamide mononucleotide (NMN) and 5' monophosphate mRNA. The NAD-cap is present at the 5'-end of some RNAs; in contrast to the canonical N7 methylguanosine (m7G) cap, the NAD cap promotes mRNA decay. Preferentially acts on NAD-capped transcripts in response to nutrient stress. Also acts on free nicotinamide adenine dinucleotide molecules: hydrolyzes NAD(H) into NMN(H) and AMP, and NADPH into NMNH and 2',5'-ADP. May act to regulate the concentration of peroxisomal nicotinamide nucleotide cofactors required for oxidative metabolism in this organelle. Regulates the levels of circadian clock components PER1, PER2, PER3 and CRY2 in the liver. The polypeptide is NAD-capped RNA hydrolase NUDT12 (Pongo abelii (Sumatran orangutan)).